The primary structure comprises 204 residues: CDP-archaeol synthase (204 aa).

Transmembrane regions (helical) follow at residues 5–25 (VYACFLGLYFLVFSLIVYVIL), 43–63 (MLWVLPAYVANASPVVFSRLV), 91–111 (FEGFLGGMLSGVLVGILLAYA), 116–136 (GVSAFLLPLGALLGDLGGAFV), 147–167 (PAILLDQLDFVAGALILQGLF), and 175–195 (VVVAVVLLTPIVHLLTNMAAF).

Belongs to the CDP-archaeol synthase family. Mg(2+) serves as cofactor.

It localises to the cell membrane. It carries out the reaction 2,3-bis-O-(geranylgeranyl)-sn-glycerol 1-phosphate + CTP + H(+) = CDP-2,3-bis-O-(geranylgeranyl)-sn-glycerol + diphosphate. Its pathway is membrane lipid metabolism; glycerophospholipid metabolism. In terms of biological role, catalyzes the formation of CDP-2,3-bis-(O-geranylgeranyl)-sn-glycerol (CDP-archaeol) from 2,3-bis-(O-geranylgeranyl)-sn-glycerol 1-phosphate (DGGGP) and CTP. This reaction is the third ether-bond-formation step in the biosynthesis of archaeal membrane lipids. The sequence is that of CDP-archaeol synthase from Thermofilum pendens (strain DSM 2475 / Hrk 5).